We begin with the raw amino-acid sequence, 474 residues long: Hydrogenobyrinate a,c-diamide synthase (474 aa).

A GATase cobBQ-type domain is found at 269 to 459 (VVAVAGGQAF…LHTHWAGCPQ (191 aa)). The Nucleophile role is filled by Cys352.

It belongs to the CobB/CbiA family. It depends on Mg(2+) as a cofactor.

It catalyses the reaction hydrogenobyrinate + 2 L-glutamine + 2 ATP + 2 H2O = hydrogenobyrinate a,c-diamide + 2 L-glutamate + 2 ADP + 2 phosphate + 2 H(+). It functions in the pathway cofactor biosynthesis; adenosylcobalamin biosynthesis; cob(II)yrinate a,c-diamide from precorrin-2 (aerobic route): step 9/10. Catalyzes the ATP-dependent amidation of the two carboxylate groups at positions a and c of hydrogenobyrinate, using either L-glutamine or ammonia as the nitrogen source. The protein is Hydrogenobyrinate a,c-diamide synthase of Thermobifida fusca (strain YX).